The primary structure comprises 125 residues: Fatty acid-binding protein, liver-type (125 aa).

This sequence belongs to the calycin superfamily. Fatty-acid binding protein (FABP) family.

The protein resides in the cytoplasm. The sequence is that of Fatty acid-binding protein, liver-type (fabp1) from Takifugu rubripes (Japanese pufferfish).